The following is a 520-amino-acid chain: Apolipoprotein N-acyltransferase (520 aa).

Transmembrane regions (helical) follow at residues 12 to 32 (IFTYFIAIFSGIIGVLAFSPF), 33 to 53 (DYWGCAYLSLLGLIFVAKTAE), 58 to 78 (LWSAFLWGLAFFTFGINWVHV), 93 to 113 (VLVLVLAAYLALYPMLFAYLI), 122 to 142 (AMFPVIWTFTEFLRGWLFTGF), 168 to 188 (VTFFVMWVSAVIFNLLSVLLI), and 193 to 213 (WNVVIANLLLLTLVGGLSAYS). The region spanning 232–479 (AQGNIEQNLK…ETTLTHKVAA (248 aa)) is the CN hydrolase domain. E272 acts as the Proton acceptor in catalysis. Residue K338 is part of the active site. C390 functions as the Nucleophile in the catalytic mechanism. A helical membrane pass occupies residues 484–504 (TPYAVFGNTAIYGLSLLLLLM).

It belongs to the CN hydrolase family. Apolipoprotein N-acyltransferase subfamily.

It is found in the cell inner membrane. It catalyses the reaction N-terminal S-1,2-diacyl-sn-glyceryl-L-cysteinyl-[lipoprotein] + a glycerophospholipid = N-acyl-S-1,2-diacyl-sn-glyceryl-L-cysteinyl-[lipoprotein] + a 2-acyl-sn-glycero-3-phospholipid + H(+). Its pathway is protein modification; lipoprotein biosynthesis (N-acyl transfer). Functionally, catalyzes the phospholipid dependent N-acylation of the N-terminal cysteine of apolipoprotein, the last step in lipoprotein maturation. The sequence is that of Apolipoprotein N-acyltransferase from Pasteurella multocida (strain Pm70).